The chain runs to 384 residues: Alpha-2B adrenergic receptor (384 aa).

A helical membrane pass occupies residues 1–25; that stretch reads AIAAVITFLILFTIFGNALVILAVL. The Cytoplasmic portion of the chain corresponds to 26-36; that stretch reads TSRSLRAPQNL. The chain crosses the membrane as a helical span at residues 37-62; it reads FLVSLAAADILVATLIIPFSLANELL. The Extracellular portion of the chain corresponds to 63–72; sequence GYWYFRRTWC. C72 and C151 form a disulfide bridge. The chain crosses the membrane as a helical span at residues 73 to 95; it reads EVYLALDVLFCTSSIVHLCAISL. Residues 96–117 are Cytoplasmic-facing; it reads DRYWAVSRALQYNSKRTPRRIK. Residues 118–140 form a helical membrane-spanning segment; the sequence is CVILTVWLIAAAISLPPLIYKGD. Over 141–156 the chain is Extracellular; that stretch reads QGPQPRGRPQCKLNQE. The helical transmembrane segment at 157 to 180 threads the bilayer; that stretch reads AWYILSSSIGSFFAPCLIMILVYL. Over 181-348 the chain is Cytoplasmic; the sequence is RIYLIAKRSN…LTREKRFTFV (168 aa). Residues 192 to 289 are disordered; that stretch reads RGPRAKGAPR…PEEEEECGSP (98 aa). Positions 218 to 229 are enriched in polar residues; that stretch reads LANSPTLASSLA. The span at 240–249 shows a compositional bias: basic and acidic residues; the sequence is PPGEKERETP. The chain crosses the membrane as a helical span at residues 349–372; sequence LAVVIGVFVLCWFPFFFSYSLGAI. The Extracellular portion of the chain corresponds to 373-381; that stretch reads CPQHCKVPH. A helical transmembrane segment spans residues 382–384; the sequence is GLF.

It belongs to the G-protein coupled receptor 1 family. Adrenergic receptor subfamily. ADRA2B sub-subfamily. In terms of assembly, interacts with RAB26. Interacts with PPP1R9B. Interacts with GGA1, GGA2 and GGA3.

The protein resides in the cell membrane. Functionally, alpha-2 adrenergic receptors mediate the catecholamine-induced inhibition of adenylate cyclase through the action of G proteins. The sequence is that of Alpha-2B adrenergic receptor (ADRA2B) from Elephas maximus (Indian elephant).